A 195-amino-acid chain; its full sequence is 3-isopropylmalate dehydratase small subunit (195 aa).

The protein belongs to the LeuD family. LeuD type 1 subfamily. Heterodimer of LeuC and LeuD.

It carries out the reaction (2R,3S)-3-isopropylmalate = (2S)-2-isopropylmalate. Its pathway is amino-acid biosynthesis; L-leucine biosynthesis; L-leucine from 3-methyl-2-oxobutanoate: step 2/4. Its function is as follows. Catalyzes the isomerization between 2-isopropylmalate and 3-isopropylmalate, via the formation of 2-isopropylmaleate. This Thermobifida fusca (strain YX) protein is 3-isopropylmalate dehydratase small subunit.